Consider the following 232-residue polypeptide: Large ribosomal subunit protein uL1 (232 aa).

This sequence belongs to the universal ribosomal protein uL1 family. As to quaternary structure, part of the 50S ribosomal subunit.

Binds directly to 23S rRNA. The L1 stalk is quite mobile in the ribosome, and is involved in E site tRNA release. Its function is as follows. Protein L1 is also a translational repressor protein, it controls the translation of the L11 operon by binding to its mRNA. This Burkholderia cenocepacia (strain HI2424) protein is Large ribosomal subunit protein uL1.